The sequence spans 95 residues: Small ribosomal subunit protein bS16 (95 aa).

It belongs to the bacterial ribosomal protein bS16 family.

This chain is Small ribosomal subunit protein bS16, found in Thermotoga neapolitana (strain ATCC 49049 / DSM 4359 / NBRC 107923 / NS-E).